Consider the following 297-residue polypeptide: MSEKKFRSGFVSIVGRPNVGKSTLLNRILGEKLMITSDKPQTTRNRIKGIHNVPGGQIVFIDTPGIHRAKSRLNKFMVDEALSSVQGVDLILFLVDGAVDPEKEAGMIKEVLSGVDAPVILVMNKIDLVPKGELLERMSCYGDTYPFKEIIPVSAGTGDGVEQLVQLVHGLLPEGPCYFPDDILTDVPERFIVAEIVREKIFRLTHDEVPYSTAVVVDSFKERENGVVAISATINVERDSQKGIIIGKRGDMLKRIGTQSRQEIERLLDTKVFLELFVRVSGEWSDNSRMLKEFGYE.

In terms of domain architecture, Era-type G spans 7 to 174 (RSGFVSIVGR…VQLVHGLLPE (168 aa)). The interval 15–22 (GRPNVGKS) is G1. Residue 15-22 (GRPNVGKS) coordinates GTP. The tract at residues 41-45 (QTTRN) is G2. The segment at 62-65 (DTPG) is G3. GTP is bound by residues 62-66 (DTPGI) and 124-127 (NKID). The segment at 124 to 127 (NKID) is G4. Positions 153–155 (VSA) are G5. Residues 205–282 (THDEVPYSTA…FLELFVRVSG (78 aa)) form the KH type-2 domain.

This sequence belongs to the TRAFAC class TrmE-Era-EngA-EngB-Septin-like GTPase superfamily. Era GTPase family. In terms of assembly, monomer.

The protein localises to the cytoplasm. The protein resides in the cell inner membrane. Functionally, an essential GTPase that binds both GDP and GTP, with rapid nucleotide exchange. Plays a role in 16S rRNA processing and 30S ribosomal subunit biogenesis and possibly also in cell cycle regulation and energy metabolism. In Geobacter sp. (strain M21), this protein is GTPase Era.